The following is a 233-amino-acid chain: MAIHNRDKFLSNLAANLGRPRKTEGVERPEYSVQPQYEVLKGASQDELIDVLEKHCEVIHTDFVRTSKQELPHVVRQTIERYEAKSIIASNDKRNAEYGMDQAYNQFAEELDMHIWDASIGKENQVIAEKADVGISFSDITLAESGTVTLKNDKDNGRSISLMPKSYIAIIPKETLVPRMTQAAKQIHDDHMNGIQTPSSVCFVTGPSNSADIEMNLIVGVHGPVNVTYIVVD.

This sequence belongs to the LutC/YkgG family.

Functionally, is involved in L-lactate degradation and allows cells to grow with lactate as the sole carbon source. This chain is Lactate utilization protein C, found in Oceanobacillus iheyensis (strain DSM 14371 / CIP 107618 / JCM 11309 / KCTC 3954 / HTE831).